The sequence spans 1188 residues: DNA-directed RNA polymerase subunit beta (1188 aa).

It belongs to the RNA polymerase beta chain family. The RNAP catalytic core consists of 2 alpha, 1 beta, 1 beta' and 1 omega subunit. When a sigma factor is associated with the core the holoenzyme is formed, which can initiate transcription.

It catalyses the reaction RNA(n) + a ribonucleoside 5'-triphosphate = RNA(n+1) + diphosphate. In terms of biological role, DNA-dependent RNA polymerase catalyzes the transcription of DNA into RNA using the four ribonucleoside triphosphates as substrates. The chain is DNA-directed RNA polymerase subunit beta from Streptococcus equi subsp. zooepidemicus (strain H70).